Consider the following 173-residue polypeptide: MPTPKKGPRLASSPAHERLMLANMATSLFQNGRITTTLPKAKRLRPLAERLITFAKRGDLHSRRRVMRVIRNKSVVHILFTQIAEQMEQREGGYTRIVKIAPRVGDAAPAAVIELVTEPVAKKAVVKEAEAAAKVAEEEAPAVEAEATEATEAPVEEAAAVEAEAPADAEKAE.

Positions 136 to 173 (AEEEAPAVEAEATEATEAPVEEAAAVEAEAPADAEKAE) are disordered. Over residues 138–149 (EEAPAVEAEATE) the composition is skewed to acidic residues. Positions 150–166 (ATEAPVEEAAAVEAEAP) are enriched in low complexity.

It belongs to the bacterial ribosomal protein bL17 family. Part of the 50S ribosomal subunit. Contacts protein L32.

This chain is Large ribosomal subunit protein bL17, found in Bifidobacterium longum subsp. infantis (strain ATCC 15697 / DSM 20088 / JCM 1222 / NCTC 11817 / S12).